A 148-amino-acid polypeptide reads, in one-letter code: UPF0756 membrane protein YeaL (148 aa).

Transmembrane regions (helical) follow at residues 14–34 (ALGFVSHNTTVAVSILVLIIV), 51–71 (LTIGIIILTIGVMAPIASGSL), 80–100 (FFNWKSLVAIAVGVIVSWLGG), and 121–141 (VLGVALFRGVPVGPLIAAGLV).

Belongs to the UPF0756 family.

It localises to the cell membrane. The polypeptide is UPF0756 membrane protein YeaL (Escherichia fergusonii (strain ATCC 35469 / DSM 13698 / CCUG 18766 / IAM 14443 / JCM 21226 / LMG 7866 / NBRC 102419 / NCTC 12128 / CDC 0568-73)).